Reading from the N-terminus, the 212-residue chain is Interleukin-6 (212 aa).

Residues 1–29 (MTSFSTSAFRPVAFSLGLLLVMPAAFPAP) form the signal peptide. A disulfide bridge links Cys-72 with Cys-78. Asn-73 is a glycosylation site (N-linked (GlcNAc...) asparagine). Ser-81 is modified (phosphoserine). Cys-101 and Cys-111 form a disulfide bridge. N-linked (GlcNAc...) asparagine glycans are attached at residues Asn-160 and Asn-172.

This sequence belongs to the IL-6 superfamily. In terms of assembly, component of a hexamer of two molecules each of IL6, IL6R and IL6ST; first binds to IL6R to associate with the signaling subunit IL6ST. Interacts with IL6R (via the N-terminal ectodomain); this interaction may be affected by IL6R-binding with SORL1, hence decreasing IL6 cis signaling. Interacts with SORL1 (via the N-terminal ectodomain); this interaction leads to IL6 internalization and lysosomal degradation. May form a trimeric complex with the soluble SORL1 ectodomain and soluble IL6R receptor; this interaction might stabilize circulating IL6, hence promoting IL6 trans signaling.

Its subcellular location is the secreted. Cytokine with a wide variety of biological functions in immunity, tissue regeneration, and metabolism. Binds to IL6R, then the complex associates to the signaling subunit IL6ST/gp130 to trigger the intracellular IL6-signaling pathway. The interaction with the membrane-bound IL6R and IL6ST stimulates 'classic signaling', whereas the binding of IL6 and soluble IL6R to IL6ST stimulates 'trans-signaling'. Alternatively, 'cluster signaling' occurs when membrane-bound IL6:IL6R complexes on transmitter cells activate IL6ST receptors on neighboring receiver cells. Functionally, IL6 is a potent inducer of the acute phase response. Rapid production of IL6 contributes to host defense during infection and tissue injury, but excessive IL6 synthesis is involved in disease pathology. In the innate immune response, is synthesized by myeloid cells, such as macrophages and dendritic cells, upon recognition of pathogens through toll-like receptors (TLRs) at the site of infection or tissue injury. In the adaptive immune response, is required for the differentiation of B cells into immunoglobulin-secreting cells. Plays a major role in the differentiation of CD4(+) T cell subsets. Essential factor for the development of T follicular helper (Tfh) cells that are required for the induction of germinal-center formation. Required to drive naive CD4(+) T cells to the Th17 lineage. Also required for proliferation of myeloma cells and the survival of plasmablast cells. Its function is as follows. Acts as an essential factor in bone homeostasis and on vessels directly or indirectly by induction of VEGF, resulting in increased angiogenesis activity and vascular permeability. Induces, through 'trans-signaling' and synergistically with IL1B and TNF, the production of VEGF. Involved in metabolic controls, is discharged into the bloodstream after muscle contraction increasing lipolysis and improving insulin resistance. 'Trans-signaling' in central nervous system also regulates energy and glucose homeostasis. Mediates, through GLP-1, crosstalk between insulin-sensitive tissues, intestinal L cells and pancreatic islets to adapt to changes in insulin demand. Also acts as a myokine. Plays a protective role during liver injury, being required for maintenance of tissue regeneration. Also has a pivotal role in iron metabolism by regulating HAMP/hepcidin expression upon inflammation or bacterial infection. Through activation of IL6ST-YAP-NOTCH pathway, induces inflammation-induced epithelial regeneration. This is Interleukin-6 (IL6) from Saimiri sciureus (Common squirrel monkey).